The chain runs to 342 residues: Phosphate acyltransferase (342 aa).

This sequence belongs to the PlsX family. In terms of assembly, homodimer. Probably interacts with PlsY.

The protein resides in the cytoplasm. It catalyses the reaction a fatty acyl-[ACP] + phosphate = an acyl phosphate + holo-[ACP]. It participates in lipid metabolism; phospholipid metabolism. Functionally, catalyzes the reversible formation of acyl-phosphate (acyl-PO(4)) from acyl-[acyl-carrier-protein] (acyl-ACP). This enzyme utilizes acyl-ACP as fatty acyl donor, but not acyl-CoA. The chain is Phosphate acyltransferase from Shewanella amazonensis (strain ATCC BAA-1098 / SB2B).